A 287-amino-acid chain; its full sequence is Phosphatidylserine decarboxylase proenzyme (287 aa).

Residues Asp90, His147, and Ser253 each act as charge relay system; for autoendoproteolytic cleavage activity in the active site. Ser253 (schiff-base intermediate with substrate; via pyruvic acid; for decarboxylase activity) is an active-site residue. Ser253 is modified (pyruvic acid (Ser); by autocatalysis).

This sequence belongs to the phosphatidylserine decarboxylase family. PSD-B subfamily. Prokaryotic type I sub-subfamily. As to quaternary structure, heterodimer of a large membrane-associated beta subunit and a small pyruvoyl-containing alpha subunit. Pyruvate is required as a cofactor. In terms of processing, is synthesized initially as an inactive proenzyme. Formation of the active enzyme involves a self-maturation process in which the active site pyruvoyl group is generated from an internal serine residue via an autocatalytic post-translational modification. Two non-identical subunits are generated from the proenzyme in this reaction, and the pyruvate is formed at the N-terminus of the alpha chain, which is derived from the carboxyl end of the proenzyme. The autoendoproteolytic cleavage occurs by a canonical serine protease mechanism, in which the side chain hydroxyl group of the serine supplies its oxygen atom to form the C-terminus of the beta chain, while the remainder of the serine residue undergoes an oxidative deamination to produce ammonia and the pyruvoyl prosthetic group on the alpha chain. During this reaction, the Ser that is part of the protease active site of the proenzyme becomes the pyruvoyl prosthetic group, which constitutes an essential element of the active site of the mature decarboxylase.

The protein localises to the cell membrane. The enzyme catalyses a 1,2-diacyl-sn-glycero-3-phospho-L-serine + H(+) = a 1,2-diacyl-sn-glycero-3-phosphoethanolamine + CO2. The protein operates within phospholipid metabolism; phosphatidylethanolamine biosynthesis; phosphatidylethanolamine from CDP-diacylglycerol: step 2/2. Its function is as follows. Catalyzes the formation of phosphatidylethanolamine (PtdEtn) from phosphatidylserine (PtdSer). The protein is Phosphatidylserine decarboxylase proenzyme of Aliivibrio fischeri (strain ATCC 700601 / ES114) (Vibrio fischeri).